The primary structure comprises 927 residues: Huntington interacting protein related 1 (927 aa).

One can recognise an ENTH domain in the interval 7-136; that stretch reads AREVFVRAQL…TFHNKYPVVP (130 aa). The stretch at 336-524 forms a coiled coil; it reads RAVEDEKFAK…RESHANQLVQ (189 aa). Positions 673–914 constitute an I/LWEQ domain; it reads QTDIDKDVVG…ALRKQHYHMA (242 aa).

This sequence belongs to the SLA2 family.

The protein localises to the cytoplasm. It is found in the cytoskeleton. Functionally, regulates pre-synaptic vesicle recycling at neuromuscular junctions of mechanosensory neurons. Plays a role in maintaining a normal defecation cycle. In Caenorhabditis elegans, this protein is Huntington interacting protein related 1 (hipr-1).